An 89-amino-acid polypeptide reads, in one-letter code: Elongation factor 1-beta (89 aa).

It belongs to the EF-1-beta/EF-1-delta family.

Functionally, promotes the exchange of GDP for GTP in EF-1-alpha/GDP, thus allowing the regeneration of EF-1-alpha/GTP that could then be used to form the ternary complex EF-1-alpha/GTP/AAtRNA. This Methanococcus vannielii (strain ATCC 35089 / DSM 1224 / JCM 13029 / OCM 148 / SB) protein is Elongation factor 1-beta.